The sequence spans 293 residues: Phosphate-binding protein PstS 2 (293 aa).

The N-terminal stretch at 1-23 (MKKHKMLSLLAVSGLMGIGILAG) is a signal peptide. Residue C24 is the site of N-palmitoyl cysteine attachment. Residue C24 is the site of S-diacylglycerol cysteine attachment.

The protein belongs to the PstS family. As to quaternary structure, the complex is composed of two ATP-binding proteins (PstB), two transmembrane proteins (PstC and PstA) and a solute-binding protein (PstS).

Its subcellular location is the cell membrane. In terms of biological role, part of the ABC transporter complex PstSACB involved in phosphate import. The polypeptide is Phosphate-binding protein PstS 2 (pstS2) (Streptococcus agalactiae serotype III (strain NEM316)).